The following is a 283-amino-acid chain: Protein ATAF2 (283 aa).

The 153-residue stretch at 7–159 (LPAGFRFHPT…DWVLCRIYNK (153 aa)) folds into the NAC domain. Residues 103 to 165 (LGIKKALVFY…IYNKKGTMEK (63 aa)) mediate DNA binding. A disordered region spans residues 171–211 (EKPRTTTMAEQSSSPFDTSDSTYPTLQEDDSSSSGGHGHVV). The span at 175-195 (TTTMAEQSSSPFDTSDSTYPT) shows a compositional bias: polar residues.

As to quaternary structure, homodimer. Interacts with AHK2. Interacts with AHL12 and AHL27. Interacts with the helicase domain of the tobamovirus (TMV) replicase. Expressed in roots, cotyledons, rosette leaves, cauline leaves and mature flowers. Expressed at low levels in stems and flower buds.

It localises to the nucleus. In terms of biological role, involved in disease resistance response. May function as repressor of pathogenesis-related proteins. May function in the regulation of host basal defense responses against viral infection. Transcriptional activator involved in responses to wounding and infection with tobamovirus (TMV). Binds to the DNA sequences 5'-AAAATATCT-3' and 5'AGATTTTT-3' of CYP734A1/BAS1 and CYP72C1/SOB7 promoters, respectively. Acts as a suppressor of the brassinosteroid (BR)-inactivating enzymes CYP734A1/BAS1 and CYP72C1/SOB7, and prevents their expression in almost all tissues. Plays a central role in integrating BR homeostasis and seedling development. Regulates the spatial regulation of BR homeostasis and participates in the regulation of hypocotyl elongation and root growth by suppressing BR catabolism. Mediates connection between BR catabolism and photomorphogenesis. Binds to, and transactivates the promoter of the auxin biosynthetic gene NIT2. Stress-responsive NAC transcription factor involved in ABA-inducible leaf senescence signaling. Required for normal seed development and morphology. The chain is Protein ATAF2 (NAC081) from Arabidopsis thaliana (Mouse-ear cress).